A 481-amino-acid polypeptide reads, in one-letter code: UDP-N-acetylmuramate--L-alanine ligase (481 aa).

Residue 123–129 (GTHGKTT) participates in ATP binding.

The protein belongs to the MurCDEF family.

The protein resides in the cytoplasm. It carries out the reaction UDP-N-acetyl-alpha-D-muramate + L-alanine + ATP = UDP-N-acetyl-alpha-D-muramoyl-L-alanine + ADP + phosphate + H(+). It participates in cell wall biogenesis; peptidoglycan biosynthesis. In terms of biological role, cell wall formation. The protein is UDP-N-acetylmuramate--L-alanine ligase of Pseudomonas fluorescens (strain SBW25).